We begin with the raw amino-acid sequence, 457 residues long: Argininosuccinate lyase (457 aa).

It belongs to the lyase 1 family. Argininosuccinate lyase subfamily.

The protein localises to the cytoplasm. It catalyses the reaction 2-(N(omega)-L-arginino)succinate = fumarate + L-arginine. Its pathway is amino-acid biosynthesis; L-arginine biosynthesis; L-arginine from L-ornithine and carbamoyl phosphate: step 3/3. This is Argininosuccinate lyase from Shewanella sediminis (strain HAW-EB3).